A 227-amino-acid chain; its full sequence is DNA repair protein RecO (227 aa).

This sequence belongs to the RecO family.

Its function is as follows. Involved in DNA repair and RecF pathway recombination. This chain is DNA repair protein RecO, found in Pseudomonas savastanoi pv. phaseolicola (strain 1448A / Race 6) (Pseudomonas syringae pv. phaseolicola (strain 1448A / Race 6)).